We begin with the raw amino-acid sequence, 304 residues long: UDP-3-O-acyl-N-acetylglucosamine deacetylase (304 aa).

The Zn(2+) site is built by H79, H238, and D242. The active-site Proton donor is H265.

This sequence belongs to the LpxC family. Zn(2+) serves as cofactor.

It catalyses the reaction a UDP-3-O-[(3R)-3-hydroxyacyl]-N-acetyl-alpha-D-glucosamine + H2O = a UDP-3-O-[(3R)-3-hydroxyacyl]-alpha-D-glucosamine + acetate. It participates in glycolipid biosynthesis; lipid IV(A) biosynthesis; lipid IV(A) from (3R)-3-hydroxytetradecanoyl-[acyl-carrier-protein] and UDP-N-acetyl-alpha-D-glucosamine: step 2/6. In terms of biological role, catalyzes the hydrolysis of UDP-3-O-myristoyl-N-acetylglucosamine to form UDP-3-O-myristoylglucosamine and acetate, the committed step in lipid A biosynthesis. This is UDP-3-O-acyl-N-acetylglucosamine deacetylase from Chromobacterium violaceum (strain ATCC 12472 / DSM 30191 / JCM 1249 / CCUG 213 / NBRC 12614 / NCIMB 9131 / NCTC 9757 / MK).